Here is a 124-residue protein sequence, read N- to C-terminus: UPF0738 protein GWCH70_0774 (124 aa).

This sequence belongs to the UPF0738 family.

In Geobacillus sp. (strain WCH70), this protein is UPF0738 protein GWCH70_0774.